The sequence spans 88 residues: Large ribosomal subunit protein bL27 (88 aa).

This sequence belongs to the bacterial ribosomal protein bL27 family.

This is Large ribosomal subunit protein bL27 from Acidobacterium capsulatum (strain ATCC 51196 / DSM 11244 / BCRC 80197 / JCM 7670 / NBRC 15755 / NCIMB 13165 / 161).